Consider the following 268-residue polypeptide: Cyclohexadienyl dehydratase (268 aa).

Positions 1 to 25 (MPKSFRHLVQALACLALLASASLQA) are cleaved as a signal peptide.

This sequence belongs to the bacterial solute-binding protein 3 family. As to quaternary structure, homodimer.

Its subcellular location is the periplasm. The catalysed reaction is prephenate + H(+) = 3-phenylpyruvate + CO2 + H2O. It catalyses the reaction L-arogenate + H(+) = L-phenylalanine + CO2 + H2O. The protein operates within amino-acid biosynthesis; L-phenylalanine biosynthesis; L-phenylalanine from L-arogenate: step 1/1. It participates in amino-acid biosynthesis; L-phenylalanine biosynthesis; phenylpyruvate from prephenate: step 1/1. Functionally, forms alternative pathway for phenylalanine biosynthesis. Can catalyze two reactions: prephenate dehydratase and arogenate dehydratase. May have a role in chemotaxis or transport. The sequence is that of Cyclohexadienyl dehydratase (pheC) from Pseudomonas aeruginosa (strain ATCC 15692 / DSM 22644 / CIP 104116 / JCM 14847 / LMG 12228 / 1C / PRS 101 / PAO1).